A 228-amino-acid chain; its full sequence is Sec-independent protein translocase protein TatB (228 aa).

A helical membrane pass occupies residues 1–21 (MFDFGLGELVFVGIIALIVLG). Disordered stretches follow at residues 138–162 (RSYA…AETD) and 195–228 (PVPH…VRKS). Residues 206–228 (AISRKRDLRPKSRAKPKLRVRKS) show a composition bias toward basic residues.

The protein belongs to the TatB family. As to quaternary structure, the Tat system comprises two distinct complexes: a TatABC complex, containing multiple copies of TatA, TatB and TatC subunits, and a separate TatA complex, containing only TatA subunits. Substrates initially bind to the TatABC complex, which probably triggers association of the separate TatA complex to form the active translocon.

It is found in the cell inner membrane. In terms of biological role, part of the twin-arginine translocation (Tat) system that transports large folded proteins containing a characteristic twin-arginine motif in their signal peptide across membranes. Together with TatC, TatB is part of a receptor directly interacting with Tat signal peptides. TatB may form an oligomeric binding site that transiently accommodates folded Tat precursor proteins before their translocation. In Neisseria meningitidis serogroup A / serotype 4A (strain DSM 15465 / Z2491), this protein is Sec-independent protein translocase protein TatB.